We begin with the raw amino-acid sequence, 359 residues long: Medium-wave-sensitive opsin 1 (359 aa).

Over 1–47 the chain is Extracellular; it reads MAQQLTGEQTLDHYEDSTQASIFTYTNSNSTRGPFEGPNYHIAPRWV. Residues 12 to 38 form a required for 11-cis-retinal regeneration region; that stretch reads DHYEDSTQASIFTYTNSNSTRGPFEGP. A glycan (N-linked (GlcNAc...) asparagine) is linked at Asn-29. The chain crosses the membrane as a helical span at residues 48-72; that stretch reads YHLTSTWMILVVIASVFTNGLVLAA. The Cytoplasmic portion of the chain corresponds to 73–84; it reads TMRFKKLRHPLN. A helical transmembrane segment spans residues 85-110; sequence WILVNLAVADLAETIIASTISVVNQI. The Extracellular segment spans residues 111 to 124; sequence YGYFVLGHPLCVIE. Cysteines 121 and 198 form a disulfide. The chain crosses the membrane as a helical span at residues 125–144; the sequence is GYIVSLCGITGLWSLAIISW. The Cytoplasmic segment spans residues 145-163; it reads ERWLVVCKPFGNVRFDAKL. The helical transmembrane segment at 164–187 threads the bilayer; sequence ATVGIVFSWVWAAVWTAPPIFGWS. Residues 188–213 are Extracellular-facing; that stretch reads RYWPYGLKTSCGPDVFSGTSYPGVQS. Residues 214–241 form a helical membrane-spanning segment; sequence YMMVLMVTCCIFPLSIIVLCYLQVWLAI. Residues 242-263 lie on the Cytoplasmic side of the membrane; that stretch reads RAVAKQQKESESTQKAEKEVTR. A helical transmembrane segment spans residues 264–287; that stretch reads MVVVMVFAYCLCWGPYTFFACFAT. Topologically, residues 288-295 are extracellular; it reads AHPGYAFH. Residues 296–320 form a helical membrane-spanning segment; sequence PLVASLPSYFAKSATIYNPIIYVFM. Lys-307 carries the post-translational modification N6-(retinylidene)lysine. Topologically, residues 321 to 359 are cytoplasmic; the sequence is NRQFRNCILQLFGKKVDDSSELSSTSKTEVSSVSSVSPA.

This sequence belongs to the G-protein coupled receptor 1 family. Opsin subfamily. As to quaternary structure, monomer. Homodimer. Homotetramer. Post-translationally, O-glycosylated. In terms of processing, phosphorylated on some or all of the serine and threonine residues present in the C-terminal region. As to expression, expressed in cone photoreceptor cells.

It is found in the membrane. Its function is as follows. Visual pigments are the light-absorbing molecules that mediate vision. They consist of an apoprotein, opsin, covalently linked to cis-retinal. May increase spectral sensitivity in dim light. The protein is Medium-wave-sensitive opsin 1 (Opn1mw) of Rattus norvegicus (Rat).